The chain runs to 194 residues: A-type ATP synthase subunit E (194 aa).

The protein belongs to the V-ATPase E subunit family. Has multiple subunits with at least A(3), B(3), C, D, E, F, H, I and proteolipid K(x).

The protein resides in the cell membrane. Component of the A-type ATP synthase that produces ATP from ADP in the presence of a proton gradient across the membrane. This is A-type ATP synthase subunit E from Haloferax volcanii (strain ATCC 29605 / DSM 3757 / JCM 8879 / NBRC 14742 / NCIMB 2012 / VKM B-1768 / DS2) (Halobacterium volcanii).